The chain runs to 284 residues: MNNITSFSLIAPAKLNLFLHINGRRDDGYHELETLFTFLNYGDELSFELSDLPAIIVTGDTNGIATTDNLIYKAALLLQTQCKIKQGVKINLIKRLPMGGGVGGGSSDAASTLLALNKLWKTALSLDELAHLGLQLGADVPVFIHGKSAIAHGIGEQLEQVMLEQKWYCVVFPNQHVSTAKIFTHPELKRDTPKISGDWQQHILTNDCESLVKKLCPEVEKTLQWLLKYAPSKMTGTGSCCFVEFATQVQAQDVLANLPHTWQGFIASSVNTSPAHTELAAIFD.

Lys14 is an active-site residue. Pro97–Ser107 is an ATP binding site. Asp139 is a catalytic residue.

Belongs to the GHMP kinase family. IspE subfamily.

It carries out the reaction 4-CDP-2-C-methyl-D-erythritol + ATP = 4-CDP-2-C-methyl-D-erythritol 2-phosphate + ADP + H(+). It participates in isoprenoid biosynthesis; isopentenyl diphosphate biosynthesis via DXP pathway; isopentenyl diphosphate from 1-deoxy-D-xylulose 5-phosphate: step 3/6. Catalyzes the phosphorylation of the position 2 hydroxy group of 4-diphosphocytidyl-2C-methyl-D-erythritol. This Pseudoalteromonas translucida (strain TAC 125) protein is 4-diphosphocytidyl-2-C-methyl-D-erythritol kinase.